The chain runs to 163 residues: 6,7-dimethyl-8-ribityllumazine synthase 1 (163 aa).

5-amino-6-(D-ribitylamino)uracil is bound by residues Phe-27, 58 to 60 (ALE), and 87 to 89 (CVV). 92–93 (ET) is a (2S)-2-hydroxy-3-oxobutyl phosphate binding site. The active-site Proton donor is His-95. Asn-120 lines the 5-amino-6-(D-ribitylamino)uracil pocket. Residue Arg-134 participates in (2S)-2-hydroxy-3-oxobutyl phosphate binding.

It belongs to the DMRL synthase family.

The enzyme catalyses (2S)-2-hydroxy-3-oxobutyl phosphate + 5-amino-6-(D-ribitylamino)uracil = 6,7-dimethyl-8-(1-D-ribityl)lumazine + phosphate + 2 H2O + H(+). The protein operates within cofactor biosynthesis; riboflavin biosynthesis; riboflavin from 2-hydroxy-3-oxobutyl phosphate and 5-amino-6-(D-ribitylamino)uracil: step 1/2. Catalyzes the formation of 6,7-dimethyl-8-ribityllumazine by condensation of 5-amino-6-(D-ribitylamino)uracil with 3,4-dihydroxy-2-butanone 4-phosphate. This is the penultimate step in the biosynthesis of riboflavin. The polypeptide is 6,7-dimethyl-8-ribityllumazine synthase 1 (Rhodopseudomonas palustris (strain ATCC BAA-98 / CGA009)).